The following is a 301-amino-acid chain: Ribosomal RNA small subunit methyltransferase H (301 aa).

S-adenosyl-L-methionine is bound by residues 31 to 33 (GGY), Asp-49, Phe-76, Asp-97, and Gln-104.

This sequence belongs to the methyltransferase superfamily. RsmH family.

Its subcellular location is the cytoplasm. It carries out the reaction cytidine(1402) in 16S rRNA + S-adenosyl-L-methionine = N(4)-methylcytidine(1402) in 16S rRNA + S-adenosyl-L-homocysteine + H(+). Specifically methylates the N4 position of cytidine in position 1402 (C1402) of 16S rRNA. This is Ribosomal RNA small subunit methyltransferase H from Ehrlichia ruminantium (strain Gardel).